Consider the following 301-residue polypeptide: Homoserine O-acetyltransferase (301 aa).

The Acyl-thioester intermediate role is filled by C142. Substrate is bound by residues K163 and S192. The Proton acceptor role is filled by H235. The active site involves E237. Position 249 (R249) interacts with substrate.

It belongs to the MetA family.

The protein localises to the cytoplasm. The enzyme catalyses L-homoserine + acetyl-CoA = O-acetyl-L-homoserine + CoA. Its pathway is amino-acid biosynthesis; L-methionine biosynthesis via de novo pathway; O-acetyl-L-homoserine from L-homoserine: step 1/1. In terms of biological role, transfers an acetyl group from acetyl-CoA to L-homoserine, forming acetyl-L-homoserine. The protein is Homoserine O-acetyltransferase of Succinatimonas hippei (strain DSM 22608 / JCM 16073 / KCTC 15190 / YIT 12066).